The sequence spans 180 residues: Large ribosomal subunit protein uL5 (180 aa).

It belongs to the universal ribosomal protein uL5 family. In terms of assembly, part of the 50S ribosomal subunit; part of the 5S rRNA/L5/L18/L25 subcomplex. Contacts the 5S rRNA and the P site tRNA. Forms a bridge to the 30S subunit in the 70S ribosome.

Functionally, this is one of the proteins that bind and probably mediate the attachment of the 5S RNA into the large ribosomal subunit, where it forms part of the central protuberance. In the 70S ribosome it contacts protein S13 of the 30S subunit (bridge B1b), connecting the 2 subunits; this bridge is implicated in subunit movement. Contacts the P site tRNA; the 5S rRNA and some of its associated proteins might help stabilize positioning of ribosome-bound tRNAs. This is Large ribosomal subunit protein uL5 from Roseiflexus castenholzii (strain DSM 13941 / HLO8).